The sequence spans 558 residues: uncharacterized protein (558 aa).

The stretch at 47-78 forms a coiled coil; the sequence is DFDDLNSIFKDFQKQKKNLKDNILKFYNKKKE. Disordered stretches follow at residues 239–266 and 424–447; these read NNNN…SKIE and NNNN…NSGE. The span at 245-266 shows a compositional bias: basic and acidic residues; it reads TETESEIESKSESESESESKIE. A compositionally biased stretch (low complexity) spans 424-444; it reads NNNNNNNNNNNNNNNNNNNNN.

This is an uncharacterized protein from Dictyostelium discoideum (Social amoeba).